The sequence spans 517 residues: Retrotransposon-like protein 1 (517 aa).

Disordered stretches follow at residues 1-29 (MEVNEGQDTEGGSSRAQTLTPPPNPQQQL) and 142-161 (EEERDKRKKEEQFREADARS).

This Caenorhabditis elegans protein is Retrotransposon-like protein 1 (retr-1).